A 267-amino-acid polypeptide reads, in one-letter code: MKRNFDSVKRLVIKIGTSSLVLPSGKINLEKIDQLAFVISSLHNKGIEVVLVSSGAMGFGLNVLDLEKRPAEVGKQQAVSSVGQVAMMSLYSQVFSHYQTKVSQLLLTRDVVEYSESLANAINAFESLFELGVVPIVNENDAVSVDEMDHATKFGDNDRLSAIVAKVVGADLLIMLSDIDGLFDKNPNVYEDATLRSYVPEITEEILASAGGAGSKFGTGGMMSKIKSAQMVFENQSQMVLMNGENPRDILRVLEGAKIGTLFKQED.

K14 is a binding site for ATP. Substrate-binding residues include S54, D141, and N157. Residues S177–D178 and T219–K225 each bind ATP.

This sequence belongs to the glutamate 5-kinase family.

It is found in the cytoplasm. The enzyme catalyses L-glutamate + ATP = L-glutamyl 5-phosphate + ADP. It participates in amino-acid biosynthesis; L-proline biosynthesis; L-glutamate 5-semialdehyde from L-glutamate: step 1/2. Its function is as follows. Catalyzes the transfer of a phosphate group to glutamate to form L-glutamate 5-phosphate. This Streptococcus thermophilus protein is Glutamate 5-kinase.